A 321-amino-acid chain; its full sequence is Glycolipid transfer protein domain-containing protein 2 (321 aa).

It belongs to the GLTP family.

The protein is Glycolipid transfer protein domain-containing protein 2 (Gltpd2) of Mus musculus (Mouse).